Consider the following 62-residue polypeptide: Photosystem II reaction center protein Z (62 aa).

2 helical membrane passes run 8 to 28 (TLLAFIGLSLALVIGVPVLLA) and 41 to 61 (FSGSALWMLLVFVVGALNSFV).

It belongs to the PsbZ family. As to quaternary structure, PSII is composed of 1 copy each of membrane proteins PsbA, PsbB, PsbC, PsbD, PsbE, PsbF, PsbH, PsbI, PsbJ, PsbK, PsbL, PsbM, PsbT, PsbY, PsbZ, Psb30/Ycf12, at least 3 peripheral proteins of the oxygen-evolving complex and a large number of cofactors. It forms dimeric complexes.

Its subcellular location is the plastid. It localises to the chloroplast thylakoid membrane. May control the interaction of photosystem II (PSII) cores with the light-harvesting antenna, regulates electron flow through the 2 photosystem reaction centers. PSII is a light-driven water plastoquinone oxidoreductase, using light energy to abstract electrons from H(2)O, generating a proton gradient subsequently used for ATP formation. The protein is Photosystem II reaction center protein Z of Ostreococcus tauri.